The primary structure comprises 331 residues: Cathepsin 7 (331 aa).

Positions 1 to 17 (MTPTVFLSILCLGVALA) are cleaved as a signal peptide. A propeptide spans 18 to 111 (APAPDYNLDA…GKHIQKRNPK (94 aa)) (activation peptide). Residues 33-50 (KRSNDRTYSPEEEKQRRA) carry the Nuclear localization signal motif. An N-linked (GlcNAc...) asparagine glycan is attached at N72. Disulfide bonds link C133–C176, C167–C209, and C267–C320. C136 is an active-site residue. Active-site residues include H274 and N298.

The protein belongs to the peptidase C1 family. Expressed in placenta. Expressed in parietal and spiral artery-associated trophoblast giant cells, most abundantly during the phase of trophoblast invasion. From 14.5 dpc onwards, expressed at lower levels in labyrinth trophoblast cells. Expressed in trophoblast stem cells. Expressed in heart, liver and testis.

It localises to the endosome. It is found in the lysosome. The protein resides in the cytoplasm. Its subcellular location is the perinuclear region. The protein localises to the golgi apparatus. It localises to the nucleus. It is found in the secreted. The protein resides in the extracellular space. In terms of biological role, involved in trophoblast cell proliferation and differentiation probably by affecting mitotic cell cycle progression. Proteolytic activity and nuclear localization are essential for its role in cell cycle progression. The sequence is that of Cathepsin 7 from Mus musculus (Mouse).